The chain runs to 136 residues: Large-conductance mechanosensitive channel (136 aa).

The next 2 membrane-spanning stretches (helical) occupy residues 10-30 (FAMRGNVVDLAVGVIIGAAFG) and 76-96 (GAFIQNIFDFVIVAFAIFIAI).

Belongs to the MscL family. Homopentamer.

The protein localises to the cell inner membrane. Its function is as follows. Channel that opens in response to stretch forces in the membrane lipid bilayer. May participate in the regulation of osmotic pressure changes within the cell. This is Large-conductance mechanosensitive channel from Pectobacterium atrosepticum (strain SCRI 1043 / ATCC BAA-672) (Erwinia carotovora subsp. atroseptica).